Here is a 227-residue protein sequence, read N- to C-terminus: Myogenin (227 aa).

Residues 82–133 enclose the bHLH domain; it reads DRRRAATLREKRRLKKVNEAFEALKRSTLLNPNQRLPKVEILRSAIQYIERL. The disordered stretch occupies residues 147–196; the sequence is QRELRYRPAAPQPAAPSECGSGSSSCSPEWSTQLEFGTNPADHLLSDDQA. Positions 161 to 175 are enriched in low complexity; the sequence is APSECGSGSSSCSPE.

As to quaternary structure, homodimer and heterodimer. Efficient DNA binding requires dimerization with another bHLH protein.

It localises to the nucleus. Functionally, acts as a transcriptional activator that promotes transcription of muscle-specific target genes and plays a role in muscle differentiation. Induces fibroblasts to differentiate into myoblasts. Probable sequence specific DNA-binding protein. The chain is Myogenin (MYOG) from Gallus gallus (Chicken).